The primary structure comprises 686 residues: DNA gyrase subunit B (686 aa).

The segment covering 1–27 (MADSGNPNENNPSTDTGVNDAVSTSHG) has biased composition (polar residues). The tract at residues 1-29 (MADSGNPNENNPSTDTGVNDAVSTSHGDA) is disordered. The region spanning 465–579 (CEIFIVEGDS…SGHVYLSRPP (115 aa)) is the Toprim domain. Mg(2+)-binding residues include Glu471, Asp544, and Asp546.

This sequence belongs to the type II topoisomerase GyrB family. In terms of assembly, heterotetramer, composed of two GyrA and two GyrB chains. In the heterotetramer, GyrA contains the active site tyrosine that forms a transient covalent intermediate with DNA, while GyrB binds cofactors and catalyzes ATP hydrolysis. It depends on Mg(2+) as a cofactor. Mn(2+) is required as a cofactor. Requires Ca(2+) as cofactor.

The protein localises to the cytoplasm. The catalysed reaction is ATP-dependent breakage, passage and rejoining of double-stranded DNA.. Functionally, a type II topoisomerase that negatively supercoils closed circular double-stranded (ds) DNA in an ATP-dependent manner to modulate DNA topology and maintain chromosomes in an underwound state. Negative supercoiling favors strand separation, and DNA replication, transcription, recombination and repair, all of which involve strand separation. Also able to catalyze the interconversion of other topological isomers of dsDNA rings, including catenanes and knotted rings. Type II topoisomerases break and join 2 DNA strands simultaneously in an ATP-dependent manner. The protein is DNA gyrase subunit B of Streptomyces coelicolor (strain ATCC BAA-471 / A3(2) / M145).